Here is a 237-residue protein sequence, read N- to C-terminus: Probable septum site-determining protein MinC (237 aa).

The protein belongs to the MinC family. As to quaternary structure, interacts with MinD and FtsZ.

Cell division inhibitor that blocks the formation of polar Z ring septums. Rapidly oscillates between the poles of the cell to destabilize FtsZ filaments that have formed before they mature into polar Z rings. Prevents FtsZ polymerization. The sequence is that of Probable septum site-determining protein MinC from Buchnera aphidicola subsp. Acyrthosiphon pisum (strain 5A).